A 124-amino-acid polypeptide reads, in one-letter code: Tax1-binding protein 3 homolog (124 aa).

The region spanning 18–106 (AVELHKQEVI…DRAVKFIKQS (89 aa)) is the PDZ domain.

May regulate a number of protein-protein interactions by competing for PDZ domain binding sites. The chain is Tax1-binding protein 3 homolog from Caenorhabditis elegans.